The primary structure comprises 443 residues: Exodeoxyribonuclease 7 large subunit (443 aa).

It belongs to the XseA family. Heterooligomer composed of large and small subunits.

The protein localises to the cytoplasm. It carries out the reaction Exonucleolytic cleavage in either 5'- to 3'- or 3'- to 5'-direction to yield nucleoside 5'-phosphates.. Bidirectionally degrades single-stranded DNA into large acid-insoluble oligonucleotides, which are then degraded further into small acid-soluble oligonucleotides. This chain is Exodeoxyribonuclease 7 large subunit, found in Stenotrophomonas maltophilia (strain R551-3).